The primary structure comprises 333 residues: Ketol-acid reductoisomerase (NADP(+)) (333 aa).

Residues Thr-6–Thr-186 form the KARI N-terminal Rossmann domain. Residues Tyr-29–Gln-32, Lys-52, Ser-55, Ser-57, and Asp-87–Gln-90 each bind NADP(+). His-112 is a catalytic residue. Gly-138 serves as a coordination point for NADP(+). Residues Thr-187–Ser-332 form the KARI C-terminal knotted domain. Asp-195, Glu-199, Glu-231, and Glu-235 together coordinate Mg(2+). Position 256 (Ser-256) interacts with substrate.

This sequence belongs to the ketol-acid reductoisomerase family. It depends on Mg(2+) as a cofactor.

It carries out the reaction (2R)-2,3-dihydroxy-3-methylbutanoate + NADP(+) = (2S)-2-acetolactate + NADPH + H(+). The catalysed reaction is (2R,3R)-2,3-dihydroxy-3-methylpentanoate + NADP(+) = (S)-2-ethyl-2-hydroxy-3-oxobutanoate + NADPH + H(+). Its pathway is amino-acid biosynthesis; L-isoleucine biosynthesis; L-isoleucine from 2-oxobutanoate: step 2/4. The protein operates within amino-acid biosynthesis; L-valine biosynthesis; L-valine from pyruvate: step 2/4. Its function is as follows. Involved in the biosynthesis of branched-chain amino acids (BCAA). Catalyzes an alkyl-migration followed by a ketol-acid reduction of (S)-2-acetolactate (S2AL) to yield (R)-2,3-dihydroxy-isovalerate. In the isomerase reaction, S2AL is rearranged via a Mg-dependent methyl migration to produce 3-hydroxy-3-methyl-2-ketobutyrate (HMKB). In the reductase reaction, this 2-ketoacid undergoes a metal-dependent reduction by NADPH to yield (R)-2,3-dihydroxy-isovalerate. This is Ketol-acid reductoisomerase (NADP(+)) from Tropheryma whipplei (strain TW08/27) (Whipple's bacillus).